A 257-amino-acid chain; its full sequence is Global transcriptional regulator CodY (257 aa).

The segment at 1–155 is GAF domain; sequence MSLLSKTREL…AATVIGMEIL (155 aa). A DNA-binding region (H-T-H motif) is located at residues 203–222; sequence ASKVADGVGITRSVIVNALR.

This sequence belongs to the CodY family.

Its subcellular location is the cytoplasm. Functionally, DNA-binding global transcriptional regulator which is involved in the adaptive response to starvation and acts by directly or indirectly controlling the expression of numerous genes in response to nutrient availability. During rapid exponential growth, CodY is highly active and represses genes whose products allow adaptation to nutrient depletion. The chain is Global transcriptional regulator CodY from Staphylococcus aureus (strain bovine RF122 / ET3-1).